Reading from the N-terminus, the 296-residue chain is Fructose-bisphosphate aldolase class 1 (296 aa).

The active-site Proton acceptor is Glu175. Catalysis depends on Lys212, which acts as the Schiff-base intermediate with dihydroxyacetone-P.

The protein belongs to the class I fructose-bisphosphate aldolase family.

The enzyme catalyses beta-D-fructose 1,6-bisphosphate = D-glyceraldehyde 3-phosphate + dihydroxyacetone phosphate. Its pathway is carbohydrate degradation; glycolysis; D-glyceraldehyde 3-phosphate and glycerone phosphate from D-glucose: step 4/4. The protein is Fructose-bisphosphate aldolase class 1 of Staphylococcus epidermidis (strain ATCC 35984 / DSM 28319 / BCRC 17069 / CCUG 31568 / BM 3577 / RP62A).